Consider the following 95-residue polypeptide: Protein TusB (95 aa).

Belongs to the DsrH/TusB family. Heterohexamer, formed by a dimer of trimers. The hexameric TusBCD complex contains 2 copies each of TusB, TusC and TusD. The TusBCD complex interacts with TusE.

The protein localises to the cytoplasm. In terms of biological role, part of a sulfur-relay system required for 2-thiolation of 5-methylaminomethyl-2-thiouridine (mnm(5)s(2)U) at tRNA wobble positions. This chain is Protein TusB, found in Pectobacterium atrosepticum (strain SCRI 1043 / ATCC BAA-672) (Erwinia carotovora subsp. atroseptica).